We begin with the raw amino-acid sequence, 529 residues long: Peptide chain release factor 3 (529 aa).

Residues 11 to 280 (NKRRTFAIIS…GLTKWAPTPL (270 aa)) enclose the tr-type G domain. GTP contacts are provided by residues 20–27 (SHPDAGKT), 88–92 (DTPGH), and 142–145 (NKCD).

The protein belongs to the TRAFAC class translation factor GTPase superfamily. Classic translation factor GTPase family. PrfC subfamily.

It is found in the cytoplasm. Its function is as follows. Increases the formation of ribosomal termination complexes and stimulates activities of RF-1 and RF-2. It binds guanine nucleotides and has strong preference for UGA stop codons. It may interact directly with the ribosome. The stimulation of RF-1 and RF-2 is significantly reduced by GTP and GDP, but not by GMP. The sequence is that of Peptide chain release factor 3 from Pseudoalteromonas translucida (strain TAC 125).